The chain runs to 699 residues: MSKINKLEHIRNIGICAHIDAGKTTTTERILYYTGKSHKIGEVHEGGATMDWMEQEQERGITITSAATTCRWQDKIINIIDTPGHVDFTIEVERSLRVLDGAVAVFDGVAGVEPQSETVWRQADKYNVPRMCFVNKMDRMGADFYRCVEMLKDRLGAKPLVIQLPVGIEENFKGIIDLIKMKAVIWKDEALGAEYFEEDIPADMKDKAEEYRAKLLDMVVELDDHVMEKYLSGEEVTAEEIKRLIRKGTISAAFYPVLCGSAFKNKGVQPLLDAVVDFLPSPIDIGIVKGMEVSTGEEKDFPISVTEPFAALRFKIMNDPFVGSLTFIRIYSGKITSGTTVINTVKNKREKIGRMLLMHANNREDVKEASAGDIVALAGLKDTTTGDTLSDIDQQVILERMEFPEPVIELAVEPKSTADQEKMGLALSRLAAEDPSFRVSTDYETGQTVIKGMGELHLEIIIDRMRREFKVEANIGAPQVAYRETITKVCEIDYTHKKQSGGAGQFARVKIIFEPLKEVKDLKDEDKNKNFVFESKIIGGAVPKEYIPGVEKGLNNIRETGVIAGYPMIDFKATLVDGAFHDVDSSVLAFEIAAKAAFREGMPKGNPKLLEPIMQVEVITPDEYMGDIIGDLNSRRGQIQSMDPRGNAQVVTANVPLAEMFGYVNTLRSLSQGRAQFSMIFSHYDQVPSQVADIIKAKK.

Residues 8 to 283 enclose the tr-type G domain; sequence EHIRNIGICA…AVVDFLPSPI (276 aa). GTP is bound by residues 17-24, 81-85, and 135-138; these read AHIDAGKT, DTPGH, and NKMD.

This sequence belongs to the TRAFAC class translation factor GTPase superfamily. Classic translation factor GTPase family. EF-G/EF-2 subfamily.

It localises to the cytoplasm. Functionally, catalyzes the GTP-dependent ribosomal translocation step during translation elongation. During this step, the ribosome changes from the pre-translocational (PRE) to the post-translocational (POST) state as the newly formed A-site-bound peptidyl-tRNA and P-site-bound deacylated tRNA move to the P and E sites, respectively. Catalyzes the coordinated movement of the two tRNA molecules, the mRNA and conformational changes in the ribosome. In Rickettsia rickettsii, this protein is Elongation factor G.